A 448-amino-acid polypeptide reads, in one-letter code: Clusterin (448 aa).

A signal peptide spans 1 to 21 (MKILLLCVALLLIWDNGMVLG). The short motif at 77-80 (KKKK) is the Nuclear localization signal element. Disulfide bonds link Cys-101–Cys-312, Cys-112–Cys-304, Cys-115–Cys-301, Cys-120–Cys-294, and Cys-128–Cys-284. An N-linked (GlcNAc...) asparagine glycan is attached at Asn-102. A Phosphoserine modification is found at Ser-132. N-linked (GlcNAc...) asparagine glycans are attached at residues Asn-144, Asn-290, Asn-327, Asn-353, and Asn-373. Ser-395 carries the post-translational modification Phosphoserine. Residues 442–446 (RRKSR) carry the Nuclear localization signal motif.

It belongs to the clusterin family. In terms of assembly, antiparallel disulfide-linked heterodimer of an alpha chain and a beta chain. Self-associates and forms higher oligomers. Interacts with a broad range of misfolded proteins, including APP, APOC2 and LYZ. Slightly acidic pH promotes interaction with misfolded proteins. Forms high-molecular weight oligomers upon interaction with misfolded proteins. Interacts with APOA1, LRP2, CLUAP1 and PON1. Interacts with the complement membrane attack complex. Interacts (via alpha chain) with XRCC6. Interacts with SYVN1, COMMD1, BTRC, CUL1 and with ubiquitin and SCF (SKP1-CUL1-F-box protein) E3 ubiquitin-protein ligase complexes. Interacts (via alpha chain) with BAX in stressed cells, where BAX undergoes a conformation change leading to association with the mitochondrial membrane. Does not interact with BAX in unstressed cells. Found in a complex with LTF, CLU, EPPIN and SEMG1. Interacts (immaturely glycosylated pre-secreted form) with HSPA5; this interaction promotes CLU stability and facilitates stress-induced CLU retrotranslocation from the secretory pathway to the mitochondria, thereby reducing stress-induced apoptosis by stabilizing mitochondrial membrane integrity. Interacts with BCL2L1; this interaction releases and activates BAX and promotes cell death. Interacts with TGFBR2 and ACVR1. Interacts (secreted form) with STMN3; this interaction may act as an important modulator during neuronal differentiation. Interacts with VLDLR and LRP8. In terms of processing, proteolytically cleaved on its way through the secretory system, probably within the Golgi lumen. Proteolytic cleavage is not necessary for its chaperone activity. All non-secreted forms are not proteolytically cleaved. Chaperone activity of uncleaved forms is dependent on a non-reducing environment. Post-translationally, polyubiquitinated, leading to proteasomal degradation. Under cellular stress, the intracellular level of cleaved form is reduced due to proteasomal degradation. Extensively glycosylated with sulfated N-linked carbohydrates. About 30% of the protein mass is comprised of complex N-linked carbohydrate. Endoplasmic reticulum (ER) stress induces changes in glycosylation status and increases level of hypoglycosylated forms. Core carbohydrates are essential for chaperone activity. Non-secreted forms are hypoglycosylated or unglycosylated. In terms of tissue distribution, most abundant in stomach, liver, brain, and testis, with intermediate levels in heart, ovary and kidney.

The protein localises to the secreted. It is found in the nucleus. It localises to the cytoplasm. The protein resides in the mitochondrion membrane. Its subcellular location is the cytosol. The protein localises to the microsome. It is found in the endoplasmic reticulum. It localises to the mitochondrion. The protein resides in the perinuclear region. Its subcellular location is the cytoplasmic vesicle. The protein localises to the secretory vesicle. It is found in the chromaffin granule. Functionally, functions as extracellular chaperone that prevents aggregation of non native proteins. Prevents stress-induced aggregation of blood plasma proteins. Inhibits formation of amyloid fibrils by APP, APOC2, B2M, CALCA, CSN3, SNCA and aggregation-prone LYZ variants (in vitro). Does not require ATP. Maintains partially unfolded proteins in a state appropriate for subsequent refolding by other chaperones, such as HSPA8/HSC70. Does not refold proteins by itself. Binding to cell surface receptors triggers internalization of the chaperone-client complex and subsequent lysosomal or proteasomal degradation. When secreted, protects cells against apoptosis and against cytolysis by complement: inhibits assembly of the complement membrane attack complex (MAC) by preventing polymerization of C9 pore component of the MAC complex. Intracellular forms interact with ubiquitin and SCF (SKP1-CUL1-F-box protein) E3 ubiquitin-protein ligase complexes and promote the ubiquitination and subsequent proteasomal degradation of target proteins. Promotes proteasomal degradation of COMMD1 and IKBKB. Modulates NF-kappa-B transcriptional activity. Following stress, promotes apoptosis. Inhibits apoptosis when associated with the mitochondrial membrane by interference with BAX-dependent release of cytochrome c into the cytoplasm. Plays a role in the regulation of cell proliferation. Following ER stress, suppresses stress-induced apoptosis by stabilizing mitochondrial membrane integrity through interaction with HSPA5. When secreted, does not affect caspase or BAX-mediated intrinsic apoptosis and TNF-induced NF-kappa-B-activity. When secreted, acts as an important modulator during neuronal differentiation through interaction with STMN3. Plays a role in the clearance of immune complexes that arise during cell injury. In Mus musculus (Mouse), this protein is Clusterin.